Reading from the N-terminus, the 388-residue chain is Beta-hexosaminidase LpqI (388 aa).

An N-terminal signal peptide occupies residues 1–19 (MAFPRTLAILAAAAALVVA). C20 is lipidated: N-palmitoyl cysteine. A lipid anchor (S-diacylglycerol cysteine) is attached at C20. Residues D123, R131, R193, and 223 to 224 (KH) contribute to the substrate site. Catalysis depends on H236, which acts as the Proton donor/acceptor. D311 acts as the Nucleophile in catalysis.

This sequence belongs to the glycosyl hydrolase 3 family.

The protein resides in the cell inner membrane. The enzyme catalyses Hydrolysis of terminal non-reducing N-acetyl-D-hexosamine residues in N-acetyl-beta-D-hexosaminides.. It functions in the pathway cell wall biogenesis; peptidoglycan recycling. Its function is as follows. Plays a role in peptidoglycan recycling by cleaving the terminal beta-1,4-linked N-acetylglucosamine (GlcNAc) from peptidoglycan fragments. Acts as a regulator for GlcNAc-MurNAc levels by cleaving disaccharides and allowing the breakdown of MurNAc. The protein is Beta-hexosaminidase LpqI of Mycobacterium tuberculosis (strain ATCC 25618 / H37Rv).